Consider the following 125-residue polypeptide: Oxytocin-neurophysin 1 (125 aa).

Residues 1 to 19 form the signal peptide; sequence MAGPSLACCLLGLLALTSA. Cysteines 20 and 25 form a disulfide. Position 28 is a glycine amide (glycine 28). Cystine bridges form between cysteine 41-cysteine 85, cysteine 44-cysteine 58, cysteine 52-cysteine 75, cysteine 59-cysteine 65, cysteine 92-cysteine 104, cysteine 98-cysteine 116, and cysteine 105-cysteine 110.

Belongs to the vasopressin/oxytocin family. As to quaternary structure, interacts with oxytocin receptor (Ki=1.5 nM). Interacts with vasopressin V1aR/AVPR1A (Ki=37 nM), V1bR/AVPR1B (Ki=222 nM) and V2R/AVPR2 receptors (Ki=823 nM).

The protein resides in the secreted. In terms of biological role, neurophysin 1 specifically binds oxytocin. Functionally, oxytocin causes contraction of the smooth muscle of the uterus and of the mammary gland. Acts by binding to oxytocin receptor (OXTR). The protein is Oxytocin-neurophysin 1 (OXT) of Homo sapiens (Human).